We begin with the raw amino-acid sequence, 130 residues long: Small ribosomal subunit protein uS11 (130 aa).

It belongs to the universal ribosomal protein uS11 family. As to quaternary structure, part of the 30S ribosomal subunit. Interacts with proteins S7 and S18. Binds to IF-3.

Functionally, located on the platform of the 30S subunit, it bridges several disparate RNA helices of the 16S rRNA. Forms part of the Shine-Dalgarno cleft in the 70S ribosome. In Acidiphilium cryptum (strain JF-5), this protein is Small ribosomal subunit protein uS11.